The sequence spans 568 residues: 2-succinyl-5-enolpyruvyl-6-hydroxy-3-cyclohexene-1-carboxylate synthase (568 aa).

Belongs to the TPP enzyme family. MenD subfamily. In terms of assembly, homodimer. The cofactor is Mg(2+). Mn(2+) is required as a cofactor. Requires thiamine diphosphate as cofactor.

The enzyme catalyses isochorismate + 2-oxoglutarate + H(+) = 5-enolpyruvoyl-6-hydroxy-2-succinyl-cyclohex-3-ene-1-carboxylate + CO2. It functions in the pathway quinol/quinone metabolism; 1,4-dihydroxy-2-naphthoate biosynthesis; 1,4-dihydroxy-2-naphthoate from chorismate: step 2/7. The protein operates within quinol/quinone metabolism; menaquinone biosynthesis. Functionally, catalyzes the thiamine diphosphate-dependent decarboxylation of 2-oxoglutarate and the subsequent addition of the resulting succinic semialdehyde-thiamine pyrophosphate anion to isochorismate to yield 2-succinyl-5-enolpyruvyl-6-hydroxy-3-cyclohexene-1-carboxylate (SEPHCHC). The polypeptide is 2-succinyl-5-enolpyruvyl-6-hydroxy-3-cyclohexene-1-carboxylate synthase (Actinobacillus pleuropneumoniae serotype 5b (strain L20)).